The following is a 304-amino-acid chain: Recombination-associated protein RdgC (304 aa).

Belongs to the RdgC family.

It is found in the cytoplasm. The protein localises to the nucleoid. Its function is as follows. May be involved in recombination. This is Recombination-associated protein RdgC from Shewanella baltica (strain OS195).